The sequence spans 177 residues: Parathyroid hormone-related protein (177 aa).

The first 24 residues, 1–24 (MLRRLVQQWSVAVFLLSYSVPSCG), serve as a signal peptide directing secretion. Positions 25 to 34 (RSVEGPGRRL) are excised as a propeptide. The tract at residues 57-68 (RFFLHHLIAEIH) is important for receptor binding. A disordered region spans residues 74-177 (ATSEVSPNSK…PEPELDSRRH (104 aa)). Residues 76-90 (SEVSPNSKPAANTKN) are compositionally biased toward polar residues. Positions 108–129 (TNKVEPYKEQPLKTPGKKKKGK) match the Nuclear localization signal motif. Positions 109 to 118 (NKVEPYKEQP) are enriched in basic and acidic residues. The segment covering 122–132 (PGKKKKGKPGK) has biased composition (basic residues).

Belongs to the parathyroid hormone family. As to quaternary structure, PTHrP interacts with PTH1R (via N-terminal extracellular domain). There are several secretory forms, including osteostatin, arising from endoproteolytic cleavage of the initial translation product. Each of these secretory forms is believed to have one or more of its own receptors that mediates the normal paracrine, autocrine and endocrine actions.

It is found in the secreted. The protein localises to the cytoplasm. The protein resides in the nucleus. Its function is as follows. Neuroendocrine peptide which is a critical regulator of cellular and organ growth, development, migration, differentiation and survival and of epithelial calcium ion transport. Acts by binding to its receptor, PTH1R, activating G protein-coupled receptor signaling. Regulates endochondral bone development and epithelial-mesenchymal interactions during the formation of the mammary glands and teeth. Required for skeletal homeostasis. Promotes mammary mesenchyme differentiation and bud outgrowth by modulating mesenchymal cell responsiveness to BMPs. Up-regulates BMPR1A expression in the mammary mesenchyme and this increases the sensitivity of these cells to BMPs and allows them to respond to BMP4 in a paracrine and/or autocrine fashion. BMP4 signaling in the mesenchyme, in turn, triggers epithelial outgrowth and augments MSX2 expression, which causes the mammary mesenchyme to inhibit hair follicle formation within the nipple sheath. Potent inhibitor of osteoclastic bone resorption. In Oryctolagus cuniculus (Rabbit), this protein is Parathyroid hormone-related protein (PTHLH).